Here is a 399-residue protein sequence, read N- to C-terminus: Dual-specificity RNA methyltransferase RlmN (399 aa).

E122 (proton acceptor) is an active-site residue. The Radical SAM core domain maps to 128–371; that stretch reads ETDRGTLCVS…VRTPRGRDIL (244 aa). A disulfide bridge links C135 with C374. The [4Fe-4S] cluster site is built by C142, C146, and C149. S-adenosyl-L-methionine-binding positions include 200–201, S232, 254–256, and N331; these read GE and SLH. C374 acts as the S-methylcysteine intermediate in catalysis.

It belongs to the radical SAM superfamily. RlmN family. [4Fe-4S] cluster is required as a cofactor.

It localises to the cytoplasm. The catalysed reaction is adenosine(2503) in 23S rRNA + 2 reduced [2Fe-2S]-[ferredoxin] + 2 S-adenosyl-L-methionine = 2-methyladenosine(2503) in 23S rRNA + 5'-deoxyadenosine + L-methionine + 2 oxidized [2Fe-2S]-[ferredoxin] + S-adenosyl-L-homocysteine. It carries out the reaction adenosine(37) in tRNA + 2 reduced [2Fe-2S]-[ferredoxin] + 2 S-adenosyl-L-methionine = 2-methyladenosine(37) in tRNA + 5'-deoxyadenosine + L-methionine + 2 oxidized [2Fe-2S]-[ferredoxin] + S-adenosyl-L-homocysteine. In terms of biological role, specifically methylates position 2 of adenine 2503 in 23S rRNA and position 2 of adenine 37 in tRNAs. m2A2503 modification seems to play a crucial role in the proofreading step occurring at the peptidyl transferase center and thus would serve to optimize ribosomal fidelity. The chain is Dual-specificity RNA methyltransferase RlmN from Rhodopseudomonas palustris (strain BisB18).